The following is a 200-amino-acid chain: Serine/threonine-protein kinase mos (200 aa).

In terms of domain architecture, Protein kinase spans 2–200 (LCLLQPLGSG…ELLKGERVTA (199 aa)). ATP is bound by residues 8 to 16 (LGSGGFGSV) and lysine 29. Catalysis depends on aspartate 143, which acts as the Proton acceptor.

This sequence belongs to the protein kinase superfamily. Ser/Thr protein kinase family.

It catalyses the reaction L-seryl-[protein] + ATP = O-phospho-L-seryl-[protein] + ADP + H(+). The catalysed reaction is L-threonyl-[protein] + ATP = O-phospho-L-threonyl-[protein] + ADP + H(+). The polypeptide is Serine/threonine-protein kinase mos (MOS) (Nycticorax nycticorax (Black-crowned night-heron)).